The primary structure comprises 527 residues: UvrABC system protein C (527 aa).

The GIY-YIG domain occupies 9–87; the sequence is KNPGCYIYKN…IKKYSPKYNI (79 aa). The UVR domain occupies 191–226; that stretch reads DSLIHELKNEMNEKSKNLQFEEALLIREEINAIERL.

It belongs to the UvrC family. Interacts with UvrB in an incision complex.

It is found in the cytoplasm. The UvrABC repair system catalyzes the recognition and processing of DNA lesions. UvrC both incises the 5' and 3' sides of the lesion. The N-terminal half is responsible for the 3' incision and the C-terminal half is responsible for the 5' incision. This Methanococcus maripaludis (strain DSM 14266 / JCM 13030 / NBRC 101832 / S2 / LL) protein is UvrABC system protein C.